A 198-amino-acid chain; its full sequence is Ribonuclease HII (198 aa).

One can recognise an RNase H type-2 domain in the interval 3 to 194 (RRVCGVDEAG…VKRCLALGQQ (192 aa)). Positions 9, 10, and 101 each coordinate a divalent metal cation.

Belongs to the RNase HII family. The cofactor is Mn(2+). It depends on Mg(2+) as a cofactor.

The protein localises to the cytoplasm. It catalyses the reaction Endonucleolytic cleavage to 5'-phosphomonoester.. Functionally, endonuclease that specifically degrades the RNA of RNA-DNA hybrids. In Laribacter hongkongensis (strain HLHK9), this protein is Ribonuclease HII.